We begin with the raw amino-acid sequence, 200 residues long: Transcription elongation factor A protein-like 3 (200 aa).

Positions 1–200 are disordered; that stretch reads MEKPYNKNEG…QRGLHDIPYL (200 aa). A compositionally biased stretch (acidic residues) spans 20–36; it reads DEVEPDDEGKSDEEEKP. S30 is modified (phosphoserine). Residues 37 to 50 show a composition bias toward basic and acidic residues; the sequence is DVEGKTECEGKRED. The segment covering 51-64 has biased composition (acidic residues); the sequence is EGEPGDEGQLEDEG. Position 65 is a phosphoserine (S65). Composition is skewed to basic and acidic residues over residues 65 to 80, 96 to 107, and 115 to 154; these read SQEK…KPQG, AAEKRPAEDYVP, and DRGT…EELR.

The protein belongs to the TFS-II family. TFA subfamily.

Its subcellular location is the nucleus. Its function is as follows. May be involved in transcriptional regulation. This Homo sapiens (Human) protein is Transcription elongation factor A protein-like 3 (TCEAL3).